Reading from the N-terminus, the 587-residue chain is Laccase abr2 (587 aa).

Positions 1-17 are cleaved as a signal peptide; the sequence is MWYQSASLLGVAAVAQA. 2 consecutive Plastocyanin-like domains span residues 41 to 137 and 168 to 350; these read IFVN…VHIR and LVML…ANDG. N-linked (GlcNAc...) asparagine glycosylation occurs at asparagine 71. The Cu cation site is built by histidine 75, histidine 77, histidine 119, and histidine 121. N-linked (GlcNAc...) asparagine glycosylation is found at asparagine 228, asparagine 383, asparagine 420, and asparagine 462. The 181-residue stretch at 397 to 577 folds into the Plastocyanin-like 3 domain; it reads PPYPAISPAS…ILMDGVDVWP (181 aa). Residue histidine 487 coordinates Cu cation. An N-linked (GlcNAc...) asparagine glycan is attached at asparagine 504.

This sequence belongs to the multicopper oxidase family.

It is found in the cell surface. Its pathway is pigment biosynthesis; melanin biosynthesis. Laccase; part of the gene cluster that mediates the biosynthesis of dihydroxynaphthalene (DHN)-melanin, a bluish-green pigment and a structural component of the conidial wall. The first step of the pathway is the production of the heptaketide naphtopyrone YWA1 by the polyketide synthase alb1 though condensation of acetyl-CoA with malonyl-CoA. The naphtopyrone YWA1 is then converted to the pentaketide 1,3,6,8-tetrahydroxynaphthalene (1,3,6,8-THN) by the heptaketide hydrolyase ayg1 though chain-length shortening. 1,3,6,8-THN is substrate of the hydroxynaphthalene reductase arp2 to yield scytalone. The scytalone dehydratase arp1 then reduces scytalone to 1,3,8-THN. 1,3,8-THN is also substrate of the hydroxynaphthalene reductase arp2 to yield vermelone. Vermelone is further converted by the multicopper oxidase abr1 to 1,8-DHN. Finally the laccase abr2 transforms 1,8-DHN to DHN-melanin. DHN-melanin biosynthesis appears to be initiated in endosomes where early enzymes (abl1, ayg1, arp1 and arp2) localize, with exocytosis leading to melanin deposition on the cell surface where late enzymes (abr1 and abr2) localize. DHN-melanin is an important structural component of the outer cell wall and is required for the presence of conidial surface hydrophobins. DHN-melanin also plays a crucial role in fungal virulence, including a protective role against the host's immune defenses. DHN-melanin also protects conidia against amoeba predation. The sequence is that of Laccase abr2 from Aspergillus fumigatus (strain ATCC MYA-4609 / CBS 101355 / FGSC A1100 / Af293) (Neosartorya fumigata).